The chain runs to 297 residues: Chelated iron transport system membrane protein YfeD (297 aa).

Helical transmembrane passes span 20 to 40 (AIVA…YLVL), 58 to 78 (IVLA…SGIF), 96 to 116 (TVMG…FSRI), 133 to 153 (ISLT…LVVL), 172 to 192 (IGLP…LTIV), 197 to 217 (AVGV…AFMI), 224 to 244 (MLVV…LISF), and 248 to 268 (GATG…ALIY).

This sequence belongs to the ABC-3 integral membrane protein family.

It is found in the cell inner membrane. Its function is as follows. Part of an ATP-driven transport system YfeABCD for chelated iron. The sequence is that of Chelated iron transport system membrane protein YfeD (yfeD) from Yersinia pestis.